The primary structure comprises 982 residues: Coatomer subunit beta (982 aa).

4 HEAT repeats span residues 16–53 (SGAP…NGEP), 130–167 (ELVE…RFPE), 241–278 (YDKG…SPTA), and 317–352 (LQDS…NQNS).

In terms of assembly, oligomeric complex that consists of at least the alpha, beta, beta', gamma, delta, epsilon and zeta subunits.

The protein localises to the cytoplasm. The protein resides in the golgi apparatus membrane. It is found in the cytoplasmic vesicle. It localises to the COPI-coated vesicle membrane. In terms of biological role, the coatomer is a cytosolic protein complex that binds to dilysine motifs and reversibly associates with Golgi non-clathrin-coated vesicles, which further mediate biosynthetic protein transport from the ER, via the Golgi up to the trans Golgi network. Coatomer complex is required for budding from Golgi membranes, and is essential for the retrograde Golgi-to-ER transport of dilysine-tagged proteins. The polypeptide is Coatomer subunit beta (Trypanosoma brucei brucei).